A 207-amino-acid chain; its full sequence is Cytochrome c biogenesis ATP-binding export protein CcmA (207 aa).

The ABC transporter domain occupies 2-204 (LECENLSCTR…TTIDIRNFNR (203 aa)). 34-41 (GPNGSGKT) serves as a coordination point for ATP.

The protein belongs to the ABC transporter superfamily. CcmA exporter (TC 3.A.1.107) family. In terms of assembly, the complex is composed of two ATP-binding proteins (CcmA) and two transmembrane proteins (CcmB).

It localises to the cell membrane. The catalysed reaction is heme b(in) + ATP + H2O = heme b(out) + ADP + phosphate + H(+). Its function is as follows. Part of the ABC transporter complex CcmAB involved in the biogenesis of c-type cytochromes; once thought to export heme, this seems not to be the case, but its exact role is uncertain. Responsible for energy coupling to the transport system. In Wolbachia pipientis wMel, this protein is Cytochrome c biogenesis ATP-binding export protein CcmA.